We begin with the raw amino-acid sequence, 634 residues long: Chaperone protein HtpG (634 aa).

The segment at 1–342 (MTVDTDKQTL…SADLSLNVSR (342 aa)) is a; substrate-binding. The interval 343–559 (EILQSGPVVD…QGDLGLQMRQ (217 aa)) is b. The tract at residues 560–634 (LLEASGQAVP…LNKLLLELSA (75 aa)) is c.

Belongs to the heat shock protein 90 family. As to quaternary structure, homodimer.

The protein localises to the cytoplasm. Its function is as follows. Molecular chaperone. Has ATPase activity. The chain is Chaperone protein HtpG from Xanthomonas campestris pv. campestris (strain 8004).